The chain runs to 548 residues: Membrane protein insertase YidC (548 aa).

A helical membrane pass occupies residues 6–26 (NLLVIALLFVSFMIWQAWEQD). The disordered stretch occupies residues 28-58 (NPQPQQQQTTQTTTTAAGSAADQGVPASGQG). Positions 29-42 (PQPQQQQTTQTTTT) are enriched in low complexity. 4 consecutive transmembrane segments (helical) span residues 350 to 370 (FLGN…GIMY), 420 to 440 (LGGC…YYML), 458 to 478 (LSAQ…MFFI), and 499 to 519 (PVIF…YYIV).

The protein belongs to the OXA1/ALB3/YidC family. Type 1 subfamily. As to quaternary structure, interacts with the Sec translocase complex via SecD. Specifically interacts with transmembrane segments of nascent integral membrane proteins during membrane integration.

Its subcellular location is the cell inner membrane. In terms of biological role, required for the insertion and/or proper folding and/or complex formation of integral membrane proteins into the membrane. Involved in integration of membrane proteins that insert both dependently and independently of the Sec translocase complex, as well as at least some lipoproteins. Aids folding of multispanning membrane proteins. The protein is Membrane protein insertase YidC of Enterobacter sp. (strain 638).